The primary structure comprises 142 residues: Hemoglobin subunit alpha-1 (142 aa).

S1 carries the N-acetylserine modification. Residues 1–142 form the Globin domain; it reads SLSDKDKAAV…VALALAQRYR (142 aa). H59 is a binding site for O2. Residue H88 participates in heme b binding.

The protein belongs to the globin family. As to quaternary structure, hb1 is a heterotetramer of two alpha-2 chains and two beta chains. In terms of tissue distribution, red blood cells.

Involved in oxygen transport from gills to the various peripheral tissues. In Notothenia neglecta (Yellowbelly rockcod), this protein is Hemoglobin subunit alpha-1 (hba1).